The following is a 333-amino-acid chain: Glycerol-3-phosphate dehydrogenase [NAD(P)+] (333 aa).

NADPH is bound by residues Trp11, Arg30, and Lys105. Sn-glycerol 3-phosphate-binding residues include Lys105, Gly133, and Ser135. Ala137 provides a ligand contact to NADPH. Positions 188, 241, 251, 252, and 253 each coordinate sn-glycerol 3-phosphate. Lys188 (proton acceptor) is an active-site residue. Arg252 is a binding site for NADPH. Residues Val276 and Glu278 each contribute to the NADPH site.

This sequence belongs to the NAD-dependent glycerol-3-phosphate dehydrogenase family.

It is found in the cytoplasm. The enzyme catalyses sn-glycerol 3-phosphate + NAD(+) = dihydroxyacetone phosphate + NADH + H(+). It catalyses the reaction sn-glycerol 3-phosphate + NADP(+) = dihydroxyacetone phosphate + NADPH + H(+). It functions in the pathway membrane lipid metabolism; glycerophospholipid metabolism. Its function is as follows. Catalyzes the reduction of the glycolytic intermediate dihydroxyacetone phosphate (DHAP) to sn-glycerol 3-phosphate (G3P), the key precursor for phospholipid synthesis. This is Glycerol-3-phosphate dehydrogenase [NAD(P)+] from Methylibium petroleiphilum (strain ATCC BAA-1232 / LMG 22953 / PM1).